We begin with the raw amino-acid sequence, 885 residues long: Alanine--tRNA ligase (885 aa).

Zn(2+) contacts are provided by His572, His576, Cys675, and His679.

The protein belongs to the class-II aminoacyl-tRNA synthetase family. It depends on Zn(2+) as a cofactor.

The protein localises to the cytoplasm. It catalyses the reaction tRNA(Ala) + L-alanine + ATP = L-alanyl-tRNA(Ala) + AMP + diphosphate. Catalyzes the attachment of alanine to tRNA(Ala) in a two-step reaction: alanine is first activated by ATP to form Ala-AMP and then transferred to the acceptor end of tRNA(Ala). Also edits incorrectly charged Ser-tRNA(Ala) and Gly-tRNA(Ala) via its editing domain. This Leifsonia xyli subsp. xyli (strain CTCB07) protein is Alanine--tRNA ligase.